A 445-amino-acid polypeptide reads, in one-letter code: UPF0210 protein STER_0157 (445 aa).

Belongs to the UPF0210 family. Homodimer.

The sequence is that of UPF0210 protein STER_0157 from Streptococcus thermophilus (strain ATCC BAA-491 / LMD-9).